The following is a 198-amino-acid chain: Synaptobrevin homolog YKT6-B (198 aa).

The Longin domain maps to 8 to 127 (VLYKGENKVH…IQYNALDSYL (120 aa)). A v-SNARE coiled-coil homology domain is found at 138 to 198 (PMSKVQAELD…RKQNSCCDIM (61 aa)). The S-palmitoyl cysteine moiety is linked to residue C194. C195 bears the Cysteine methyl ester mark. C195 is lipidated: S-farnesyl cysteine. A propeptide spans 196 to 198 (DIM) (removed in mature form).

It belongs to the synaptobrevin family. In terms of processing, palmitoylated; catalyzes its own palmitoylation. Palmitoylation is required for Golgi targeting. Post-translationally, farnesylation is required for Golgi targeting.

The protein resides in the cytoplasm. It is found in the cytosol. It localises to the cytoplasmic vesicle membrane. The protein localises to the golgi apparatus membrane. Vesicular soluble NSF attachment protein receptor (v-SNARE) mediating vesicle docking and fusion to a specific acceptor cellular compartment. Functions in endoplasmic reticulum to Golgi transport; as part of a SNARE complex composed of GOSR1, GOSR2 and STX5. Functions in early/recycling endosome to TGN transport; as part of a SNARE complex composed of BET1L, GOSR1 and STX5. Has a S-palmitoyl transferase activity. The chain is Synaptobrevin homolog YKT6-B (ykt6-b) from Xenopus laevis (African clawed frog).